The primary structure comprises 1308 residues: D-lysergyl-peptide-synthetase subunit 2 (1308 aa).

The tract at residues 261–658 (EWCRRTPSAV…CRKSTQVKLR (398 aa)) is adenylation (A) domain. A Carrier domain is found at 803–871 (IEEAFQRFFA…ELSELARHTK (69 aa)). Ser-835 carries the O-(pantetheine 4'-phosphoryl)serine modification. The condensation (C) domain stretch occupies residues 910 to 1299 (EDVYPCTPLQ…HAAPRTLIGD (390 aa)).

The protein belongs to the NRP synthetase family.

It functions in the pathway alkaloid biosynthesis; ergot alkaloid biosynthesis. Its function is as follows. D-lysergyl-peptide-synthetase subunit 2; part of the gene cluster that mediates the biosynthesis of fungal ergot alkaloid. DmaW catalyzes the first step of ergot alkaloid biosynthesis by condensing dimethylallyl diphosphate (DMAP) and tryptophan to form 4-dimethylallyl-L-tryptophan. The second step is catalyzed by the methyltransferase easF that methylates 4-dimethylallyl-L-tryptophan in the presence of S-adenosyl-L-methionine, resulting in the formation of 4-dimethylallyl-L-abrine. The catalase easC and the FAD-dependent oxidoreductase easE then transform 4-dimethylallyl-L-abrine to chanoclavine-I which is further oxidized by EasD in the presence of NAD(+), resulting in the formation of chanoclavine-I aldehyde. Agroclavine dehydrogenase easG then mediates the conversion of chanoclavine-I aldehyde to agroclavine via a non-enzymatic adduct reaction: the substrate is an iminium intermediate that is formed spontaneously from chanoclavine-I aldehyde in the presence of glutathione. The presence of easA is not required to complete this reaction. Further conversion of agroclavine to paspalic acid is a two-step process involving oxidation of agroclavine to elymoclavine and of elymoclavine to paspalic acid, the second step being performed by the elymoclavine oxidase cloA. Paspalic acid is then further converted to D-lysergic acid. Ergopeptines are assembled from D-lysergic acid and three different amino acids by the D-lysergyl-peptide-synthetases composed each of a monomudular and a trimodular nonribosomal peptide synthetase subunit. LpsB and lpsC encode the monomodular subunits responsible for D-lysergic acid activation and incorporation into the ergopeptine backbone. LpsA1 and A2 subunits encode the trimodular nonribosomal peptide synthetase assembling the tripeptide portion of ergopeptines. LpsA1 is responsible for formation of the major ergopeptine, ergotamine, and lpsA2 for alpha-ergocryptine, the minor ergopeptine of the total alkaloid mixture elaborated by C.purpurea. D-lysergyl-tripeptides are assembled by the nonribosomal peptide synthetases and released as N-(D-lysergyl-aminoacyl)-lactams. Cyclolization of the D-lysergyl-tripeptides is performed by the Fe(2+)/2-ketoglutarate-dependent dioxygenase easH which introduces a hydroxyl group into N-(D-lysergyl-aminoacyl)-lactam at alpha-C of the aminoacyl residue followed by spontaneous condensation with the terminal lactam carbonyl group. This is D-lysergyl-peptide-synthetase subunit 2 from Claviceps purpurea (Ergot fungus).